The chain runs to 155 residues: Rusticyanin (155 aa).

In terms of domain architecture, Plastocyanin-like spans 53 to 155; it reads SFEVHDKKNP…TGMFGKIIVK (103 aa). Positions 85, 138, 143, and 148 each coordinate Cu cation.

In terms of assembly, monomer. The cofactor is Cu cation.

Its subcellular location is the periplasm. Electron carrier from cytochrome c552 to the A-type oxidase. The sequence is that of Rusticyanin (rus) from Acidithiobacillus ferrooxidans (Thiobacillus ferrooxidans).